The primary structure comprises 216 residues: Uracil phosphoribosyltransferase (216 aa).

30–34 provides a ligand contact to GTP; sequence KNLVK. Residues Arg-80, Arg-105, and 140-148 contribute to the 5-phospho-alpha-D-ribose 1-diphosphate site; that span reads DPMIATGST. Uracil is bound by residues Ile-203 and 208 to 210; that span reads GDA. Asp-209 is a 5-phospho-alpha-D-ribose 1-diphosphate binding site.

The protein belongs to the UPRTase family. It depends on Mg(2+) as a cofactor.

The enzyme catalyses UMP + diphosphate = 5-phospho-alpha-D-ribose 1-diphosphate + uracil. Its pathway is pyrimidine metabolism; UMP biosynthesis via salvage pathway; UMP from uracil: step 1/1. Allosterically activated by GTP. In terms of biological role, catalyzes the conversion of uracil and 5-phospho-alpha-D-ribose 1-diphosphate (PRPP) to UMP and diphosphate. In Sulfolobus acidocaldarius (strain ATCC 33909 / DSM 639 / JCM 8929 / NBRC 15157 / NCIMB 11770), this protein is Uracil phosphoribosyltransferase.